The primary structure comprises 433 residues: Nuclear distribution protein PAC1 (433 aa).

One can recognise a LisH domain in the interval 8 to 40; that stretch reads QKDELHRAMLAYLHAAGMHNAYAALQHDAALAD. The stretch at 57–84 forms a coiled coil; that stretch reads SVIRLQKKVIDLENRNAALLAELAAAAR. WD repeat units follow at residues 103–144, 146–184, 188–227, 230–269, 272–336, 339–378, and 381–429; these read SHRA…RTLK, HTKA…TNVK, GHDH…CIKT, GHAE…TKME, GHEH…CLRT, GHDN…CTKT, and AHSH…QTIK.

The protein belongs to the WD repeat LIS1/nudF family. Self-associates. Interacts with NDL1 and dynein.

The protein resides in the cytoplasm. Its subcellular location is the cytoskeleton. It localises to the spindle pole. Positively regulates the activity of the minus-end directed microtubule motor protein dynein. Plays a central role in positioning the mitotic spindle at the bud neck during cell division. Targets cytoplasmic dynein to microtubule plus ends, thereby promoting dynein-mediated microtubule sliding along the bud cortex and consequently the movement of the mitotic spindle to the bud neck. The chain is Nuclear distribution protein PAC1 from Cryptococcus neoformans var. neoformans serotype D (strain B-3501A) (Filobasidiella neoformans).